A 453-amino-acid chain; its full sequence is Serine/threonine-protein phosphatase 2A regulatory subunit B'' subunit gamma (453 aa).

Positions 1 to 27 (MDWKDVLRRRLASPNSDPKRKKSEQEL) are disordered. EF-hand domains are found at residues 273 to 308 (PSALRVYGQYLNLDKDHNGMLSKEELSRYGTATMTN) and 341 to 376 (KEPAALQYIFKLLDIENKGYLNVFSLNYFFRAIQEL). 5 residues coordinate Ca(2+): Asp-286, Asp-288, Asn-290, Met-292, and Glu-297.

As to quaternary structure, interacts with MCM3AP/GANP, PPP5C, and the phosphatase 2A core enzyme composed of the PPP2CA catalytic subunit and the constant regulatory subunit PPP2R1A. Finds in a complex with ABCB1, TFPI2 and PPP2R3C; leading to the dephosphorylation of ABCB1.

Its subcellular location is the nucleus. It localises to the cytoplasm. May regulate MCM3AP phosphorylation through phosphatase recruitment. May act as a negative regulator of ABCB1 expression and function through the dephosphorylation of ABCB1 by TFPI2/PPP2R3C complex. May play a role in the activation-induced cell death of B-cells. This Rattus norvegicus (Rat) protein is Serine/threonine-protein phosphatase 2A regulatory subunit B'' subunit gamma (Ppp2r3c).